The sequence spans 391 residues: Thioredoxin-interacting protein (391 aa).

K212 is covalently cross-linked (Glycyl lysine isopeptide (Lys-Gly) (interchain with G-Cter in ubiquitin)). Residue S361 is modified to Phosphoserine.

This sequence belongs to the arrestin family. As to quaternary structure, homodimer; disulfide-linked. Interacts with TXN/thioredoxin through its redox-active site. Interacts with transcriptional repressors ZBTB16, ZBTB32 and HDAC1. Interacts with DDIT4. Ubiquitinated; undergoes heterotypic 'Lys-48'-/'Lys-63'-branched polyubiquitination catalyzed by ITCH and UBR5 resulting in proteasomal degradation. Deubiquitinated by USP5, leading to TXNIP stabilization.

The protein resides in the cytoplasm. Its function is as follows. May act as an oxidative stress mediator by inhibiting thioredoxin activity or by limiting its bioavailability. Interacts with COPS5 and restores COPS5-induced suppression of CDKN1B stability, blocking the COPS5-mediated translocation of CDKN1B from the nucleus to the cytoplasm. Functions as a transcriptional repressor, possibly by acting as a bridge molecule between transcription factors and corepressor complexes, and over-expression will induce G0/G1 cell cycle arrest. Required for the maturation of natural killer cells. Acts as a suppressor of tumor cell growth. Inhibits the proteasomal degradation of DDIT4, and thereby contributes to the inhibition of the mammalian target of rapamycin complex 1 (mTORC1). In Sus scrofa (Pig), this protein is Thioredoxin-interacting protein (TXNIP).